Here is a 385-residue protein sequence, read N- to C-terminus: Cytochrome b (385 aa).

Helical transmembrane passes span 32–52 (FGSL…TLAM), 76–98 (WFIR…AHMG), 113–133 (PWSI…MGYV), and 179–199 (FFAL…LHLI). Positions 82 and 96 each coordinate heme b. Residues His183 and His197 each coordinate heme b. His202 serves as a coordination point for a ubiquinone. 4 helical membrane passes run 225–245 (YSFK…LFVF), 289–309 (LGGV…PIVD), 321–341 (ISKL…VLGQ), and 348–368 (FIVL…ILLP).

The protein belongs to the cytochrome b family. Fungal cytochrome b-c1 complex contains 10 subunits; 3 respiratory subunits, 2 core proteins and 5 low-molecular weight proteins. Cytochrome b-c1 complex is a homodimer. It depends on heme b as a cofactor.

The protein resides in the mitochondrion inner membrane. Its function is as follows. Component of the ubiquinol-cytochrome c reductase complex (complex III or cytochrome b-c1 complex) that is part of the mitochondrial respiratory chain. The b-c1 complex mediates electron transfer from ubiquinol to cytochrome c. Contributes to the generation of a proton gradient across the mitochondrial membrane that is then used for ATP synthesis. The sequence is that of Cytochrome b (COB) from Yarrowia lipolytica (strain CLIB 122 / E 150) (Yeast).